The sequence spans 596 residues: Probable tripeptidyl-peptidase SED2 (596 aa).

The N-terminal stretch at 1 to 16 (MRLLKFVCLLASVAAA) is a signal peptide. Positions 17-203 (KPTPGASHKV…LESMSVEEFA (187 aa)) are cleaved as a propeptide — removed in mature form. Positions 210–596 (LVTTACLREL…NFQALTKVLP (387 aa)) constitute a Peptidase S53 domain. Asn-265 carries an N-linked (GlcNAc...) asparagine glycan. Residues Glu-286 and Asp-290 each act as charge relay system in the active site. An N-linked (GlcNAc...) asparagine glycan is attached at Asn-403. The active-site Charge relay system is the Ser-501. Residues Asp-543 and Ile-544 each contribute to the Ca(2+) site. An N-linked (GlcNAc...) asparagine glycan is attached at Asn-572. Residues Gly-576 and Asp-578 each coordinate Ca(2+).

Requires Ca(2+) as cofactor.

Its subcellular location is the secreted. The protein localises to the extracellular space. The enzyme catalyses Release of an N-terminal tripeptide from a polypeptide.. Functionally, secreted tripeptidyl-peptidase which degrades proteins at acidic pHs and is involved in virulence. The protein is Probable tripeptidyl-peptidase SED2 (SED2) of Arthroderma benhamiae (strain ATCC MYA-4681 / CBS 112371) (Trichophyton mentagrophytes).